The following is a 156-amino-acid chain: Ribosomal RNA large subunit methyltransferase H (156 aa).

S-adenosyl-L-methionine is bound by residues leucine 73, glycine 104, and 123–128 (LSALTL).

Belongs to the RNA methyltransferase RlmH family. Homodimer.

The protein resides in the cytoplasm. It catalyses the reaction pseudouridine(1915) in 23S rRNA + S-adenosyl-L-methionine = N(3)-methylpseudouridine(1915) in 23S rRNA + S-adenosyl-L-homocysteine + H(+). Functionally, specifically methylates the pseudouridine at position 1915 (m3Psi1915) in 23S rRNA. The chain is Ribosomal RNA large subunit methyltransferase H from Shewanella oneidensis (strain ATCC 700550 / JCM 31522 / CIP 106686 / LMG 19005 / NCIMB 14063 / MR-1).